An 839-amino-acid polypeptide reads, in one-letter code: Glycerol-3-phosphate acyltransferase (839 aa).

The HXXXXD motif motif lies at 309-314; sequence CHRSHI.

This sequence belongs to the GPAT/DAPAT family.

The protein localises to the cell inner membrane. The catalysed reaction is sn-glycerol 3-phosphate + an acyl-CoA = a 1-acyl-sn-glycero-3-phosphate + CoA. The protein operates within phospholipid metabolism; CDP-diacylglycerol biosynthesis; CDP-diacylglycerol from sn-glycerol 3-phosphate: step 1/3. The sequence is that of Glycerol-3-phosphate acyltransferase from Pseudomonas fluorescens (strain SBW25).